Consider the following 537-residue polypeptide: NAD(P)H-quinone oxidoreductase chain 4 3 (537 aa).

Transmembrane regions (helical) follow at residues 6-26 (FPWL…IPII), 36-56 (WYGL…FWHY), 87-107 (LSMP…FAAW), 115-135 (LFYG…VAQD), 136-156 (LLLF…LISI), 169-189 (FILY…ALAF), 209-229 (AIEL…LPIF), 243-263 (SAPG…YALI), 277-297 (FAPV…CCAF), 314-334 (MGFV…GAVL), 335-355 (QMVS…VTYE), 387-407 (LALP…GIAT), and 417-437 (VVVV…LLSL).

This sequence belongs to the complex I subunit 4 family.

The protein localises to the cellular thylakoid membrane. The catalysed reaction is a plastoquinone + NADH + (n+1) H(+)(in) = a plastoquinol + NAD(+) + n H(+)(out). The enzyme catalyses a plastoquinone + NADPH + (n+1) H(+)(in) = a plastoquinol + NADP(+) + n H(+)(out). Its function is as follows. NDH-1 shuttles electrons from NAD(P)H, via FMN and iron-sulfur (Fe-S) centers, to quinones in the respiratory chain. The immediate electron acceptor for the enzyme in this species is believed to be plastoquinone. Couples the redox reaction to proton translocation (for every two electrons transferred, four hydrogen ions are translocated across the cytoplasmic membrane), and thus conserves the redox energy in a proton gradient. In Trichormus variabilis (strain ATCC 29413 / PCC 7937) (Anabaena variabilis), this protein is NAD(P)H-quinone oxidoreductase chain 4 3.